A 316-amino-acid polypeptide reads, in one-letter code: Small neutral protease regulatory protein (316 aa).

The 56-residue stretch at 1-56 (MRHLRALCAIADTGSVRRAARELGVSQPALTTQLRRIEQSLGAELFHRGRDGCRPT) folds into the HTH lysR-type domain. The segment at residues 16–35 (VRRAARELGVSQPALTTQLR) is a DNA-binding region (H-T-H motif).

This sequence belongs to the LysR transcriptional regulatory family.

Its function is as follows. Transcriptional trans-activator of the gene (mprA) for the small neutral protease. In Streptomyces coelicolor, this protein is Small neutral protease regulatory protein (mprR).